A 247-amino-acid polypeptide reads, in one-letter code: Aspartate/glutamate leucyltransferase (247 aa).

Belongs to the R-transferase family. Bpt subfamily.

The protein localises to the cytoplasm. The enzyme catalyses N-terminal L-glutamyl-[protein] + L-leucyl-tRNA(Leu) = N-terminal L-leucyl-L-glutamyl-[protein] + tRNA(Leu) + H(+). It carries out the reaction N-terminal L-aspartyl-[protein] + L-leucyl-tRNA(Leu) = N-terminal L-leucyl-L-aspartyl-[protein] + tRNA(Leu) + H(+). Functionally, functions in the N-end rule pathway of protein degradation where it conjugates Leu from its aminoacyl-tRNA to the N-termini of proteins containing an N-terminal aspartate or glutamate. The protein is Aspartate/glutamate leucyltransferase of Chromohalobacter salexigens (strain ATCC BAA-138 / DSM 3043 / CIP 106854 / NCIMB 13768 / 1H11).